Reading from the N-terminus, the 642-residue chain is G protein-coupled receptor kinase 1 (642 aa).

The N-terminal stretch occupies residues 1 to 202 (MEIENIVANT…LEKRPVDKHT (202 aa)). The 137-residue stretch at 52 to 188 (YAFVVEKQPI…AESMYFHRFL (137 aa)) folds into the RGS domain. The Protein kinase domain occupies 203-470 (FRLYRVLGKG…AEEIRAHPFF (268 aa)). ATP-binding positions include 209 to 217 (LGKGGFGEV) and lysine 232. The active-site Proton acceptor is the aspartate 328. One can recognise an AGC-kinase C-terminal domain in the interval 480-545 (EPVPWKKMEA…GCVSIPWQSE (66 aa)). A disordered region spans residues 612 to 642 (VEQQQPPKTSTQTPAVRSSRAASASGRTLVI). The segment covering 614 to 636 (QQQPPKTSTQTPAVRSSRAASAS) has biased composition (low complexity).

This sequence belongs to the protein kinase superfamily. AGC Ser/Thr protein kinase family. GPRK subfamily.

It carries out the reaction [G-protein-coupled receptor] + ATP = [G-protein-coupled receptor]-phosphate + ADP + H(+). Functionally, specifically phosphorylates the activated forms of G protein-coupled receptors. The protein is G protein-coupled receptor kinase 1 (grk-1) of Caenorhabditis elegans.